A 115-amino-acid polypeptide reads, in one-letter code: Large ribosomal subunit protein P2 (115 aa).

N-acetylmethionine is present on Met1. A phosphoserine mark is found at Ser17 and Ser19. An N6-acetyllysine; alternate modification is found at Lys21. At Lys21 the chain carries N6-succinyllysine; alternate. Positions 76-90 (APGSAAPAAGSAPAA) are enriched in low complexity. A disordered region spans residues 76–115 (APGSAAPAAGSAPAAAEERKEEKKEESEESDDDMGFGLFD). A phosphoserine mark is found at Ser79 and Ser86. Residues 91-101 (AEERKEEKKEE) show a composition bias toward basic and acidic residues. Ser102 and Ser105 each carry phosphoserine.

It belongs to the eukaryotic ribosomal protein P1/P2 family. As to quaternary structure, heterodimer with RPLP1 at the lateral ribosomal stalk of the large ribosomal subunit.

In terms of biological role, plays an important role in the elongation step of protein synthesis. This is Large ribosomal subunit protein P2 (RPLP2) from Equus caballus (Horse).